Reading from the N-terminus, the 236-residue chain is Ribitol-5-phosphate cytidylyltransferase (236 aa).

Residues 7 to 10 and 80 to 86 each bind CTP; these read LAGG and GTDRNET.

Belongs to the IspD/TarI cytidylyltransferase family. TarI subfamily.

The enzyme catalyses D-ribitol 5-phosphate + CTP + H(+) = CDP-L-ribitol + diphosphate. It functions in the pathway cell wall biogenesis; poly(ribitol phosphate) teichoic acid biosynthesis. In terms of biological role, catalyzes the transfer of the cytidylyl group of CTP to D-ribitol 5-phosphate. The polypeptide is Ribitol-5-phosphate cytidylyltransferase (Listeria monocytogenes serovar 1/2a (strain ATCC BAA-679 / EGD-e)).